The primary structure comprises 422 residues: Exodeoxyribonuclease 7 large subunit (422 aa).

It belongs to the XseA family. Heterooligomer composed of large and small subunits.

Its subcellular location is the cytoplasm. It catalyses the reaction Exonucleolytic cleavage in either 5'- to 3'- or 3'- to 5'-direction to yield nucleoside 5'-phosphates.. Functionally, bidirectionally degrades single-stranded DNA into large acid-insoluble oligonucleotides, which are then degraded further into small acid-soluble oligonucleotides. This chain is Exodeoxyribonuclease 7 large subunit, found in Leptospira borgpetersenii serovar Hardjo-bovis (strain JB197).